A 312-amino-acid polypeptide reads, in one-letter code: Ribosomal RNA small subunit methyltransferase H (312 aa).

S-adenosyl-L-methionine is bound by residues 33 to 35 (SGH), Asp-53, Phe-80, Asp-101, and Gln-108.

The protein belongs to the methyltransferase superfamily. RsmH family.

The protein resides in the cytoplasm. The enzyme catalyses cytidine(1402) in 16S rRNA + S-adenosyl-L-methionine = N(4)-methylcytidine(1402) in 16S rRNA + S-adenosyl-L-homocysteine + H(+). Its function is as follows. Specifically methylates the N4 position of cytidine in position 1402 (C1402) of 16S rRNA. The protein is Ribosomal RNA small subunit methyltransferase H of Desulforapulum autotrophicum (strain ATCC 43914 / DSM 3382 / VKM B-1955 / HRM2) (Desulfobacterium autotrophicum).